Reading from the N-terminus, the 163-residue chain is MEKRILGLDPGLAILGFGAITCTPGLTQLQSTKVNILDFGVIKTSADIEIGQRLCTLFDDLHTVIDNLQPDVVAIEKLFFYRMSSTIVVAQARGVVMLALAQHHLPYVEFTPAQVKLALTGYGNADKSEVQEAVARELDLAEIPQPDDAADALAVALTAWYQM.

Residues Asp9, Glu76, and Asp148 contribute to the active site. Asp9, Glu76, and Asp148 together coordinate Mg(2+).

Belongs to the RuvC family. As to quaternary structure, homodimer which binds Holliday junction (HJ) DNA. The HJ becomes 2-fold symmetrical on binding to RuvC with unstacked arms; it has a different conformation from HJ DNA in complex with RuvA. In the full resolvosome a probable DNA-RuvA(4)-RuvB(12)-RuvC(2) complex forms which resolves the HJ. It depends on Mg(2+) as a cofactor.

The protein resides in the cytoplasm. It carries out the reaction Endonucleolytic cleavage at a junction such as a reciprocal single-stranded crossover between two homologous DNA duplexes (Holliday junction).. The RuvA-RuvB-RuvC complex processes Holliday junction (HJ) DNA during genetic recombination and DNA repair. Endonuclease that resolves HJ intermediates. Cleaves cruciform DNA by making single-stranded nicks across the HJ at symmetrical positions within the homologous arms, yielding a 5'-phosphate and a 3'-hydroxyl group; requires a central core of homology in the junction. The consensus cleavage sequence is 5'-(A/T)TT(C/G)-3'. Cleavage occurs on the 3'-side of the TT dinucleotide at the point of strand exchange. HJ branch migration catalyzed by RuvA-RuvB allows RuvC to scan DNA until it finds its consensus sequence, where it cleaves and resolves the cruciform DNA. This is Crossover junction endodeoxyribonuclease RuvC from Trichormus variabilis (strain ATCC 29413 / PCC 7937) (Anabaena variabilis).